Consider the following 760-residue polypeptide: uncharacterized protein (760 aa).

A signal peptide spans 1–23 (MVIKKGFFALSSCTLGLGLILTA). Residue cysteine 24 is the site of N-palmitoyl cysteine attachment. A lipid anchor (S-diacylglycerol cysteine) is attached at cysteine 24. 2 disordered regions span residues 220 to 262 (ANGK…NSDN) and 443 to 482 (YEIK…NQTS). Composition is skewed to polar residues over residues 222–257 (GKTT…SQDA) and 448–472 (PTNS…GKEQ).

This sequence belongs to the MG185/MG260 family.

The protein localises to the cell membrane. This is an uncharacterized protein from Mycoplasma pneumoniae (strain ATCC 29342 / M129 / Subtype 1) (Mycoplasmoides pneumoniae).